A 420-amino-acid chain; its full sequence is Probable endo-beta-1,4-glucanase celB (420 aa).

Residues 1–18 form the signal peptide; that stretch reads MLRKLTPLALALLPLVAG. A glycan (N-linked (GlcNAc...) asparagine) is linked at asparagine 118. The active-site Nucleophile is the glutamate 215. The Proton donor role is filled by glutamate 220. 3 N-linked (GlcNAc...) asparagine glycosylation sites follow: asparagine 234, asparagine 293, and asparagine 383.

It belongs to the glycosyl hydrolase 7 (cellulase C) family.

The protein resides in the secreted. It carries out the reaction Endohydrolysis of (1-&gt;4)-beta-D-glucosidic linkages in cellulose, lichenin and cereal beta-D-glucans.. Has endoglucanase activity on substrates containing beta-1,4 glycosidic bonds, like in carboxymethylcellulose (CMC), hydroxyethylcellulose (HEC) and beta-glucan. Involved in the degradation of complex natural cellulosic substrates. This is Probable endo-beta-1,4-glucanase celB (celB) from Aspergillus terreus (strain NIH 2624 / FGSC A1156).